Reading from the N-terminus, the 195-residue chain is Cysteine/O-acetylserine efflux protein (195 aa).

The Periplasmic segment spans residues methionine 1–serine 7. Residues alanine 8–leucine 28 traverse the membrane as a helical segment. At serine 29–methionine 46 the chain is on the cytoplasmic side. A helical membrane pass occupies residues serine 47–isoleucine 67. At aspartate 68–proline 69 the chain is on the periplasmic side. A helical membrane pass occupies residues alanine 70–isoleucine 90. At alanine 91–proline 104 the chain is on the cytoplasmic side. The helical transmembrane segment at isoleucine 105–valine 125 threads the bilayer. Residues threonine 126 to tryptophan 141 are Periplasmic-facing. Residues valine 142 to leucine 162 traverse the membrane as a helical segment. The Cytoplasmic segment spans residues alanine 163–arginine 176. Residues glutamine 177–phenylalanine 194 form a helical membrane-spanning segment. A topological domain (periplasmic) is located at residue tyrosine 195.

The protein belongs to the Rht family.

It localises to the cell inner membrane. It catalyses the reaction O-acetyl-L-serine(in) = O-acetyl-L-serine(out). The catalysed reaction is L-cysteine(in) = L-cysteine(out). In terms of biological role, exporter of O-acetylserine (OAS) and cysteine. The sequence is that of Cysteine/O-acetylserine efflux protein (eamB) from Escherichia coli O139:H28 (strain E24377A / ETEC).